The sequence spans 880 residues: MOG interacting and ectopic P-granules protein 1 (880 aa).

A compositionally biased stretch (polar residues) spans 1-20; that stretch reads MVTSDETVLATTTNKTSITT. Disordered stretches follow at residues 1-37, 82-257, and 350-370; these read MVTS…SETD, DKVE…DDNE, and ERPK…QHNP. Residues 23–37 are compositionally biased toward basic and acidic residues; that stretch reads MEPKSSDESTDSETD. The span at 87-105 shows a compositional bias: polar residues; it reads ATNSVVDLSSNGSSATTSV. A compositionally biased stretch (acidic residues) spans 108 to 120; sequence EEQEEKANEDETN. Composition is skewed to basic and acidic residues over residues 154–170 and 183–193; these read SKSD…IKDS and KPEEKEEKNDT. Over residues 215 to 224 the composition is skewed to acidic residues; sequence QLDDDDDDIQ. 2 stretches are compositionally biased toward basic and acidic residues: residues 235–252 and 350–364; these read QKTE…KAEP and ERPK…ERQQ. C2H2-type zinc fingers lie at residues 436-459 and 465-488; these read SRCG…ETLH and FQCT…FEAH. The CCHC-type zinc-finger motif lies at 501–523; sequence YPCAICEEDFNFKGVREQHYKQC. 4 consecutive C2H2-type zinc fingers follow at residues 728 to 751, 768 to 791, 809 to 830, and 841 to 864; these read FQCE…QVLH, LACS…VMSH, GRCK…VADH, and YSCD…SSTH.

Interacts with hda-1, let-418, lin-1, mog-1, mog-4, mog-5, mog-6, pie-1 and unc-98.

Its subcellular location is the nucleus. Its function is as follows. Has a broad role in development, specifically in the genetic pathway SynMuvB that negatively regulates specification of the vulval cell fate. Required for fem-3 3'-UTR-mediated repression in the regulation of the sperm/oocyte switch. Acts by regulating the translation of fem-3 mRNA, by binding to its 3'-UTR. The chain is MOG interacting and ectopic P-granules protein 1 from Caenorhabditis briggsae.